The chain runs to 151 residues: Probable ribonuclease P/MRP protein subunit POP5 (151 aa).

Belongs to the eukaryotic/archaeal RNase P protein component 2 family. As to quaternary structure, component of nuclear RNase P and RNase MRP ribonucleoproteins. Interacts with GAF1/RPP30.

It is found in the nucleus. The protein resides in the nucleolus. Its function is as follows. Essential protein required during embryogenesis. Component of ribonuclease P, a protein complex that generates mature tRNA molecules by cleaving their 5'-ends. Also a component of RNase MRP. The chain is Probable ribonuclease P/MRP protein subunit POP5 (EMB1687) from Arabidopsis thaliana (Mouse-ear cress).